Reading from the N-terminus, the 1480-residue chain is Nonribosomal peptide synthetase inpA (1480 aa).

Positions 1–17 (MSHSMSSSSSSSSSSSS) are enriched in low complexity. Residues 1–24 (MSHSMSSSSSSSSSSSSSRDEGQS) form a disordered region. The segment at 44–458 (VQDVYPCTPL…QLISPQDLDQ (415 aa)) is condensation. The adenylation stretch occupies residues 479–871 (QRHIDTRPDA…GRKDSQVKIR (393 aa)). The 80-residue stretch at 1003–1082 (DSTNKVALRL…GLAAMITSPH (80 aa)) folds into the Carrier domain. Ser1041 is subject to O-(pantetheine 4'-phosphoryl)serine. Positions 1117–1436 (KVFLTGATGL…VLAMLQDPQM (320 aa)) are thioesterase (TE) domain.

The protein belongs to the NRP synthetase family.

The protein operates within secondary metabolite biosynthesis. Its function is as follows. Nonribosomal peptide synthetase; part of the inp gene cluster that mediates the biosynthesis of fellutamide B, a mycotoxin that acts as a proteasome inhibitor. In the first step of fellutabmide B biosynthesis, inpC activates 3-hydroxydodecanoic acid to generate 3-hydroxydodecanoyl-AMP that is then loaded onto the T0 domain of inpB. The 3-hydroxydodecanoyl-S-phosphopantetheinyl-T0 is sequentially extended with L-Asn and L-Gln by the two CAT modules of inpB. The linear lipodipeptide from inpB is then transferred onto inpA for the addition of the third amino acid, L-Leu. Reductive releasing of the lipotripeptide by the TE domain of inpA produces (2S)-fellutamide B. InpF might be involved in the release and transfer of the lipodipeptide from inpB to inpA. The inp cluster-encoded proteasome subunit inpE confers resistance to internally produced fellutamides. The MFS efflux transporter inpD may contribute to fellutamide resistance as well. The sequence is that of Nonribosomal peptide synthetase inpA from Emericella nidulans (strain FGSC A4 / ATCC 38163 / CBS 112.46 / NRRL 194 / M139) (Aspergillus nidulans).